The chain runs to 149 residues: uncharacterized protein (149 aa).

Disordered regions lie at residues 24 to 74 and 129 to 149; these read TSQG…NDLE and AIQD…PRAP. Residues 28–42 are compositionally biased toward basic and acidic residues; it reads EDVKPEPKPEVDEKV. Residues 102–131 are a coiled coil; the sequence is SELESLKEKVSSATSMEELREIMEEFRAIQ.

This is an uncharacterized protein from Archaeoglobus fulgidus (strain ATCC 49558 / DSM 4304 / JCM 9628 / NBRC 100126 / VC-16).